We begin with the raw amino-acid sequence, 188 residues long: MNKKQRDEISKLLSYLLRHAPESMGLTLDRDGWSEVDDLIRKANAHGYAFDRQALNEVVETNEKKRFTLSEDDQRIRAAQGHSTVQVQVQHAEKEPPATLYHGTASRFMTSIETQGLIAGSRHHVHLTEDPETAMSVGKRYGQPVLLAVDAKGMFEAGVRFFQADNGIWLVKAVSRDSLTVLRLPIPE.

Belongs to the KptA/TPT1 family.

Its function is as follows. Removes the 2'-phosphate from RNA via an intermediate in which the phosphate is ADP-ribosylated by NAD followed by a presumed transesterification to release the RNA and generate ADP-ribose 1''-2''-cyclic phosphate (APPR&gt;P). May function as an ADP-ribosylase. This chain is Probable RNA 2'-phosphotransferase, found in Pseudomonas savastanoi pv. phaseolicola (strain 1448A / Race 6) (Pseudomonas syringae pv. phaseolicola (strain 1448A / Race 6)).